Here is a 397-residue protein sequence, read N- to C-terminus: uncharacterized protein (397 aa).

4 consecutive transmembrane segments (helical) span residues 255–275 (LLTYGISLTIISIFLYMICYA), 284–304 (MITFQWILFTGGLSALGVLLA), 308–328 (LITALVAFLSAPITTLVPLPL), and 370–390 (VLLVATLSNLGASIGVFYCLG).

Its subcellular location is the cell membrane. This is an uncharacterized protein from Methanocaldococcus jannaschii (strain ATCC 43067 / DSM 2661 / JAL-1 / JCM 10045 / NBRC 100440) (Methanococcus jannaschii).